The sequence spans 276 residues: 3beta-hydroxysteroid dehydrogenase (276 aa).

Residues 70 to 71, Asn97, Tyr162, and Lys166 each bind NADP(+); that span reads DV. Tyr162 functions as the Proton acceptor in the catalytic mechanism.

Belongs to the short-chain dehydrogenases/reductases (SDR) family.

It carries out the reaction 3-oxo-5beta-cholan-24-oate + NADPH + H(+) = isolithocholate + NADP(+). The catalysed reaction is 12alpha-hydroxy-3-oxo-5beta-cholan-24-oate + NADPH + H(+) = isodeoxycholate + NADP(+). It catalyses the reaction 12alpha-hydroxy-3-oxo-5beta-cholan-24-oate + NADH + H(+) = isodeoxycholate + NAD(+). The enzyme catalyses 7alpha,12alpha-dihydroxy-3-oxo-5beta-cholan-24-oate + NADPH + H(+) = isocholate + NADP(+). It carries out the reaction 3-oxochenodeoxycholate + NADPH + H(+) = isochenodeoxycholate + NADP(+). In terms of biological role, involved in the modification of secondary bile acids into iso-bile acids (3beta-bile acids) via epimerization of the 3-OH group through a 3-oxo-intermediate. Catalyzes the reduction of 12-alpha-hydroxy-3-oxo-5-beta-cholan-24-oate (3-oxo-DCA) and 3-oxo-5-beta-cholan-24-oate (3-oxo-LCA) to yield isodeoxycholate (isoDCA) and isolithocholate (isoLCA), respectively. Is also able to catalyze the reduction of 3-dehydrocholate (3-oxo-CA or 7alpha,12alpha-dihydroxy-3-oxo-5beta-cholan-24-oate) and 7-alpha-hydroxy-3-oxo-5-beta-cholan-24-oate (3-oxo-CDCA), into isocholate (isoCA) and isochenodeoxycholate (isoCDCA), respectively. Accepts both NADPH and NADH as cosubstrates. The conversion of the abundant bile acid deoxycholate (DCA) into isoDCA by the gut bacterium R.gnavus favors the growth of the keystone commensal genus Bacteroides, since isoDCA is less cytotoxic than its parent compound, DCA; iso-bile acids have thus a potential role in modulating gut community composition. The sequence is that of 3beta-hydroxysteroid dehydrogenase from Mediterraneibacter gnavus (strain ATCC 29149 / DSM 114966 / JCM 6515 / VPI C7-9) (Ruminococcus gnavus).